Reading from the N-terminus, the 147-residue chain is Hemoglobin subunit beta-1 (147 aa).

A Globin domain is found at 3–147; the sequence is EWTDKERSII…VVSALGKQYH (145 aa). Heme b contacts are provided by histidine 64 and histidine 93.

This sequence belongs to the globin family. As to quaternary structure, heterotetramer of two alpha chains and two beta chains. Red blood cells.

Involved in oxygen transport from gills to the various peripheral tissues. This chain is Hemoglobin subunit beta-1 (hbb1), found in Pagothenia borchgrevinki (Bald rockcod).